Consider the following 144-residue polypeptide: Ribosome maturation factor RimP (144 aa).

Belongs to the RimP family.

It localises to the cytoplasm. In terms of biological role, required for maturation of 30S ribosomal subunits. The protein is Ribosome maturation factor RimP of Methylobacillus flagellatus (strain ATCC 51484 / DSM 6875 / VKM B-1610 / KT).